An 829-amino-acid polypeptide reads, in one-letter code: Spindle-defective protein 2 (829 aa).

Disordered regions lie at residues 1–29, 41–104, 183–294, and 326–471; these read MNED…DGES, EDED…SNDI, KKDV…TTSD, and RKKR…NGHM. The segment covering 54–82 has biased composition (basic and acidic residues); it reads FRLENRYKPSLHTPRELPTIREENREDVR. Residues 83-93 show a composition bias toward polar residues; it reads SNTSSRVNTRP. The span at 183-216 shows a compositional bias: basic and acidic residues; sequence KKDVTRKQENVRPGKMMPEKVNDENEPKSRRFSP. 2 stretches are compositionally biased toward polar residues: residues 217–230 and 266–294; these read ERNT…NSTK and PQRT…TTSD. Positions 314 to 332 form a coiled coil; sequence VDINLLTALENARKKRDRP. Composition is skewed to low complexity over residues 361-370 and 384-408; these read SMTSIVSSST and NSAT…RVST. Polar residues-rich tracts occupy residues 409–439 and 448–463; these read AKND…NSMT and SVSS…STMT.

The protein resides in the cytoplasm. The protein localises to the cytoskeleton. Its subcellular location is the microtubule organizing center. It localises to the centrosome. It is found in the centriole. Required both for centrosome duplication and maturation. Required for pericentriolar material (PCM) recruitment. The polypeptide is Spindle-defective protein 2 (Caenorhabditis briggsae).